Reading from the N-terminus, the 350-residue chain is Leucine-rich repeat-containing protein 23 (350 aa).

Residues 1 to 54 (MEDETLEDGPEEEEEDEEEGTAEETNQDVTERDEEEEAEKDEEEDKEEEEEAEK) are compositionally biased toward acidic residues. A disordered region spans residues 1–64 (MEDETLEDGP…EEPPPHMPLS (64 aa)). 8 LRR repeats span residues 107–128 (HLRY…GALT), 129–150 (HLLS…GELP), 151–171 (YLQV…FGHP), 172–193 (RLET…ECSN), 196–216 (SLHT…LNLP), 217–238 (SLRE…EALV), 239–260 (NLTT…SEHL), and 262–283 (ALQY…QKLY). Residues 296–334 (NPCEEEEGYRMETLIALPQLERLDKDFFEEEEKREAAET) enclose the LRRCT domain. Positions 314-344 (QLERLDKDFFEEEEKREAAETKKAREEEMAE) form a coiled coil. The segment at 325 to 350 (EEEKREAAETKKAREEEMAEPGEKGN) is disordered.

Its subcellular location is the cytoplasm. The protein resides in the cytoskeleton. It is found in the flagellum axoneme. This chain is Leucine-rich repeat-containing protein 23 (lrrc23), found in Xenopus tropicalis (Western clawed frog).